A 176-amino-acid polypeptide reads, in one-letter code: ATP-dependent protease subunit HslV (176 aa).

Thr-2 is an active-site residue. Gly-157, Cys-160, and Thr-163 together coordinate Na(+).

The protein belongs to the peptidase T1B family. HslV subfamily. In terms of assembly, a double ring-shaped homohexamer of HslV is capped on each side by a ring-shaped HslU homohexamer. The assembly of the HslU/HslV complex is dependent on binding of ATP.

It localises to the cytoplasm. It catalyses the reaction ATP-dependent cleavage of peptide bonds with broad specificity.. With respect to regulation, allosterically activated by HslU binding. In terms of biological role, protease subunit of a proteasome-like degradation complex believed to be a general protein degrading machinery. The sequence is that of ATP-dependent protease subunit HslV from Pseudomonas fluorescens (strain ATCC BAA-477 / NRRL B-23932 / Pf-5).